Here is a 274-residue protein sequence, read N- to C-terminus: Formamidopyrimidine-DNA glycosylase (274 aa).

The Schiff-base intermediate with DNA role is filled by proline 2. The active-site Proton donor is glutamate 3. Lysine 58 (proton donor; for beta-elimination activity) is an active-site residue. Histidine 91 and arginine 110 together coordinate DNA. The FPG-type zinc-finger motif lies at 238–272; the sequence is QVYDKTGQECVRCGTIIEKIQLGGRGTHFCPNCQR. Residue arginine 262 is the Proton donor; for delta-elimination activity of the active site.

It belongs to the FPG family. Monomer. Zn(2+) serves as cofactor.

It catalyses the reaction Hydrolysis of DNA containing ring-opened 7-methylguanine residues, releasing 2,6-diamino-4-hydroxy-5-(N-methyl)formamidopyrimidine.. The catalysed reaction is 2'-deoxyribonucleotide-(2'-deoxyribose 5'-phosphate)-2'-deoxyribonucleotide-DNA = a 3'-end 2'-deoxyribonucleotide-(2,3-dehydro-2,3-deoxyribose 5'-phosphate)-DNA + a 5'-end 5'-phospho-2'-deoxyribonucleoside-DNA + H(+). In terms of biological role, involved in base excision repair of DNA damaged by oxidation or by mutagenic agents. Acts as a DNA glycosylase that recognizes and removes damaged bases. Has a preference for oxidized purines, such as 7,8-dihydro-8-oxoguanine (8-oxoG). Has AP (apurinic/apyrimidinic) lyase activity and introduces nicks in the DNA strand. Cleaves the DNA backbone by beta-delta elimination to generate a single-strand break at the site of the removed base with both 3'- and 5'-phosphates. This is Formamidopyrimidine-DNA glycosylase from Streptococcus pneumoniae serotype 4 (strain ATCC BAA-334 / TIGR4).